We begin with the raw amino-acid sequence, 347 residues long: UDP-N-acetylenolpyruvoylglucosamine reductase (347 aa).

The 172-residue stretch at 16 to 187 (AIEQCSHYLV…IAVGLKLPKT (172 aa)) folds into the FAD-binding PCMH-type domain. The active site involves arginine 163. Serine 233 serves as the catalytic Proton donor. Glutamate 328 is a catalytic residue.

The protein belongs to the MurB family. FAD is required as a cofactor.

The protein localises to the cytoplasm. It catalyses the reaction UDP-N-acetyl-alpha-D-muramate + NADP(+) = UDP-N-acetyl-3-O-(1-carboxyvinyl)-alpha-D-glucosamine + NADPH + H(+). The protein operates within cell wall biogenesis; peptidoglycan biosynthesis. Cell wall formation. The sequence is that of UDP-N-acetylenolpyruvoylglucosamine reductase from Vibrio vulnificus (strain CMCP6).